The chain runs to 357 residues: uncharacterized protein (357 aa).

An HEAT repeat occupies 173-211 (VLPILEKLMQDESLYVRKSVANNLNDISKTHPHLLRKVA).

This is an uncharacterized protein from Bacillus subtilis (strain 168).